We begin with the raw amino-acid sequence, 425 residues long: MNLTLLLLALIFSPSLIFSLPTANKVKLVKKGLNWDYQNAKIHGVNLGGWFVLEPFITPSLFDIYSKPNDDSQVPVDEYHFTQKLGKDAAQQVLEQHWKTWYKENDFKMMLKYGLNAVRIPIGYWAFKLLDYDPYVQGQVKYLDRALDWARKYNLKVWIDLHGAPGSQNGFDNSGLRDSLGFQQGNNVNFTLEVLEIIGKKYGGPEYEDVVIGIELLNEPLGPSLDLNYLKEFFQQGYQNLRNSGSVQAVIIQDAFQPMGYWDNFLTLDQYWNVVVDHHHYQVFSAGELQRSIDDHITVACNWGWDAKKEYHWNVAGEWSAALTDCARWLNGVGRGARFSGDFDNSPYFGSCDCYVNIATWPSEYRTNVRRYIEAQLDAFEQTGGWFFWNWKCENAIEWDLQGLITAGVFPYPFYNRQFPNQCGF.

A signal peptide spans 1 to 19; that stretch reads MNLTLLLLALIFSPSLIFS. Glutamate 219 serves as the catalytic Proton donor. 2 disulfide bridges follow: cysteine 301/cysteine 423 and cysteine 326/cysteine 352. Catalysis depends on glutamate 318, which acts as the Nucleophile.

It belongs to the glycosyl hydrolase 5 (cellulase A) family.

It localises to the secreted. It carries out the reaction Successive hydrolysis of beta-D-glucose units from the non-reducing ends of (1-&gt;3)-beta-D-glucans, releasing alpha-glucose.. Its function is as follows. Beta-glucanases participate in the metabolism of beta-glucan, the main structural component of the cell wall. It could also function biosynthetically as a transglycosylase. The protein is Glucan 1,3-beta-glucosidase of Schwanniomyces occidentalis (Yeast).